We begin with the raw amino-acid sequence, 179 residues long: Ribulose bisphosphate carboxylase small subunit, chloroplastic 5 (179 aa).

The transit peptide at 1 to 58 directs the protein to the chloroplast; that stretch reads MASSATMLSSVATAACAAPAQASMVAPFVGLKSASAFPVTQKTATGLSTLPSNGGRVQ.

Belongs to the RuBisCO small chain family. In terms of assembly, heterohexadecamer of 8 large and 8 small subunits.

Its subcellular location is the plastid. It localises to the chloroplast. Functionally, ruBisCO catalyzes two reactions: the carboxylation of D-ribulose 1,5-bisphosphate, the primary event in carbon dioxide fixation, as well as the oxidative fragmentation of the pentose substrate. Both reactions occur simultaneously and in competition at the same active site. Although the small subunit is not catalytic it is essential for maximal activity. In Fritillaria agrestis (Stinkbells), this protein is Ribulose bisphosphate carboxylase small subunit, chloroplastic 5.